Here is a 384-residue protein sequence, read N- to C-terminus: 23S rRNA (uracil(747)-C(5))-methyltransferase RlmC (384 aa).

Residues Cys7, Cys15, Cys18, and Cys94 each contribute to the [4Fe-4S] cluster site. Residues Gln219, Phe248, Glu269, and Asn316 each coordinate S-adenosyl-L-methionine. The Nucleophile role is filled by Cys343.

It belongs to the class I-like SAM-binding methyltransferase superfamily. RNA M5U methyltransferase family. RlmC subfamily.

It carries out the reaction uridine(747) in 23S rRNA + S-adenosyl-L-methionine = 5-methyluridine(747) in 23S rRNA + S-adenosyl-L-homocysteine + H(+). In terms of biological role, catalyzes the formation of 5-methyl-uridine at position 747 (m5U747) in 23S rRNA. This chain is 23S rRNA (uracil(747)-C(5))-methyltransferase RlmC, found in Shewanella sp. (strain MR-7).